A 494-amino-acid chain; its full sequence is Cytochrome P450 71D94 (494 aa).

The helical; Signal-anchor for type II membrane protein transmembrane segment at 1 to 21 (MELNLLLVIIILVATYTVSLL) threads the bilayer. Heme is bound at residue Cys434.

The protein belongs to the cytochrome P450 family. Requires heme as cofactor.

Its subcellular location is the endoplasmic reticulum membrane. In terms of biological role, cytochrome P450 oxygenase of undefined substrate. Not active with limonene, (+)- or (-)-piperitone, (-)-isopiperitone, piperitenone or (+)-pulegone. The sequence is that of Cytochrome P450 71D94 (CYP71D94) from Mentha gracilis (Gingermint).